The sequence spans 124 residues: Small ribosomal subunit protein uS12 (124 aa).

A 3-methylthioaspartic acid modification is found at D89. The tract at residues 102 to 124 (LDTSGVNNRKHGRSKYGTKRPKS) is disordered. The span at 109 to 124 (NRKHGRSKYGTKRPKS) shows a compositional bias: basic residues.

Belongs to the universal ribosomal protein uS12 family. As to quaternary structure, part of the 30S ribosomal subunit. Contacts proteins S8 and S17. May interact with IF1 in the 30S initiation complex.

In terms of biological role, with S4 and S5 plays an important role in translational accuracy. Its function is as follows. Interacts with and stabilizes bases of the 16S rRNA that are involved in tRNA selection in the A site and with the mRNA backbone. Located at the interface of the 30S and 50S subunits, it traverses the body of the 30S subunit contacting proteins on the other side and probably holding the rRNA structure together. The combined cluster of proteins S8, S12 and S17 appears to hold together the shoulder and platform of the 30S subunit. This Francisella tularensis subsp. novicida (strain U112) protein is Small ribosomal subunit protein uS12.